The chain runs to 245 residues: tRNA1(Val) (adenine(37)-N6)-methyltransferase (245 aa).

This sequence belongs to the methyltransferase superfamily. tRNA (adenine-N(6)-)-methyltransferase family.

The protein localises to the cytoplasm. It carries out the reaction adenosine(37) in tRNA1(Val) + S-adenosyl-L-methionine = N(6)-methyladenosine(37) in tRNA1(Val) + S-adenosyl-L-homocysteine + H(+). Specifically methylates the adenine in position 37 of tRNA(1)(Val) (anticodon cmo5UAC). The polypeptide is tRNA1(Val) (adenine(37)-N6)-methyltransferase (Salmonella enteritidis PT4 (strain P125109)).